Here is a 504-residue protein sequence, read N- to C-terminus: Cytochrome P450 2K4 (504 aa).

C447 provides a ligand contact to heme.

Belongs to the cytochrome P450 family. The cofactor is heme.

The protein localises to the endoplasmic reticulum membrane. It localises to the microsome membrane. It carries out the reaction an organic molecule + reduced [NADPH--hemoprotein reductase] + O2 = an alcohol + oxidized [NADPH--hemoprotein reductase] + H2O + H(+). In Oncorhynchus mykiss (Rainbow trout), this protein is Cytochrome P450 2K4 (cyp2k4).